The primary structure comprises 952 residues: Protein translocase subunit SecA (952 aa).

ATP is bound by residues glutamine 135, 153-157 (GEGKT), and aspartate 575. Residues 614–624 (RHESRRIDNQL) show a composition bias toward basic and acidic residues. Disordered stretches follow at residues 614–636 (RHES…DPGS) and 916–946 (VSAK…GKKY). The Zn(2+) site is built by cysteine 938, cysteine 940, cysteine 949, and cysteine 950.

The protein belongs to the SecA family. Monomer and homodimer. Part of the essential Sec protein translocation apparatus which comprises SecA, SecYEG and auxiliary proteins SecDF. Other proteins may also be involved. The cofactor is Zn(2+).

The protein localises to the cell membrane. The protein resides in the cytoplasm. It carries out the reaction ATP + H2O + cellular proteinSide 1 = ADP + phosphate + cellular proteinSide 2.. Its function is as follows. Part of the Sec protein translocase complex. Interacts with the SecYEG preprotein conducting channel. Has a central role in coupling the hydrolysis of ATP to the transfer of proteins into and across the cell membrane, serving as an ATP-driven molecular motor driving the stepwise translocation of polypeptide chains across the membrane. The protein is Protein translocase subunit SecA of Dehalococcoides mccartyi (strain ATCC BAA-2100 / JCM 16839 / KCTC 5957 / BAV1).